The primary structure comprises 180 residues: Large ribosomal subunit protein uL5 (180 aa).

This sequence belongs to the universal ribosomal protein uL5 family. In terms of assembly, part of the 50S ribosomal subunit; part of the 5S rRNA/L5/L18/L25 subcomplex. Contacts the 5S rRNA and the P site tRNA. Forms a bridge to the 30S subunit in the 70S ribosome.

Functionally, this is one of the proteins that bind and probably mediate the attachment of the 5S RNA into the large ribosomal subunit, where it forms part of the central protuberance. In the 70S ribosome it contacts protein S13 of the 30S subunit (bridge B1b), connecting the 2 subunits; this bridge is implicated in subunit movement. Contacts the P site tRNA; the 5S rRNA and some of its associated proteins might help stabilize positioning of ribosome-bound tRNAs. In Heliobacterium modesticaldum (strain ATCC 51547 / Ice1), this protein is Large ribosomal subunit protein uL5.